Consider the following 456-residue polypeptide: Phosphomethylpyrimidine synthase (456 aa).

Substrate is bound by residues Asn80, Met109, Tyr139, His175, 195–197 (SRG), 236–239 (DSLR), and Glu275. His279 lines the Zn(2+) pocket. Tyr302 is a binding site for substrate. His343 is a Zn(2+) binding site. [4Fe-4S] cluster contacts are provided by Cys423, Cys426, and Cys431.

Belongs to the ThiC family. [4Fe-4S] cluster is required as a cofactor.

It catalyses the reaction 5-amino-1-(5-phospho-beta-D-ribosyl)imidazole + S-adenosyl-L-methionine = 4-amino-2-methyl-5-(phosphooxymethyl)pyrimidine + CO + 5'-deoxyadenosine + formate + L-methionine + 3 H(+). The protein operates within cofactor biosynthesis; thiamine diphosphate biosynthesis. In terms of biological role, catalyzes the synthesis of the hydroxymethylpyrimidine phosphate (HMP-P) moiety of thiamine from aminoimidazole ribotide (AIR) in a radical S-adenosyl-L-methionine (SAM)-dependent reaction. In Prochlorococcus marinus (strain MIT 9301), this protein is Phosphomethylpyrimidine synthase.